Here is a 454-residue protein sequence, read N- to C-terminus: Oxygen-dependent coproporphyrinogen-III oxidase, mitochondrial (454 aa).

The transit peptide at 1 to 110 (MALQLGRLSS…MLPKTSGTRA (110 aa)) directs the protein to the mitochondrion. A disordered region spans residues 43-70 (AAGRVCRPPGPAGTEQSRGLGHGSTSRG). Phosphoserine is present on S112. The segment at 193–202 (VLQDGCVFEK) is important for dimerization. Position 244 (S244) interacts with coproporphyrinogen III. The active-site Proton donor is the H258. A coproporphyrinogen III-binding site is contributed by 260–262 (NYR). The interval 392–428 (YVEFNLLYDRGTKFGLFTPGSRIESILMSLPLTARWE) is important for dimerization. K404 carries the N6-acetyllysine; alternate modification. K404 carries the post-translational modification N6-succinyllysine; alternate. 411–413 (GSR) is a binding site for coproporphyrinogen III.

It belongs to the aerobic coproporphyrinogen-III oxidase family. In terms of assembly, homodimer.

Its subcellular location is the mitochondrion intermembrane space. The enzyme catalyses coproporphyrinogen III + O2 + 2 H(+) = protoporphyrinogen IX + 2 CO2 + 2 H2O. It functions in the pathway porphyrin-containing compound metabolism; protoporphyrin-IX biosynthesis; protoporphyrinogen-IX from coproporphyrinogen-III (O2 route): step 1/1. Its function is as follows. Catalyzes the aerobic oxidative decarboxylation of propionate groups of rings A and B of coproporphyrinogen-III to yield the vinyl groups in protoporphyrinogen-IX and participates to the sixth step in the heme biosynthetic pathway. This Homo sapiens (Human) protein is Oxygen-dependent coproporphyrinogen-III oxidase, mitochondrial.